The chain runs to 480 residues: Ribulose bisphosphate carboxylase large chain (480 aa).

Positions 1–2 are excised as a propeptide; that stretch reads MS. Residue Pro3 is modified to N-acetylproline. Lys14 bears the N6,N6,N6-trimethyllysine mark. Residues Asn123 and Thr173 each contribute to the substrate site. Catalysis depends on Lys175, which acts as the Proton acceptor. Lys177 is a substrate binding site. Positions 201, 203, and 204 each coordinate Mg(2+). An N6-carboxylysine modification is found at Lys201. His294 functions as the Proton acceptor in the catalytic mechanism. 3 residues coordinate substrate: Arg295, His327, and Ser379.

It belongs to the RuBisCO large chain family. Type I subfamily. As to quaternary structure, heterohexadecamer of 8 large chains and 8 small chains; disulfide-linked. The disulfide link is formed within the large subunit homodimers. The cofactor is Mg(2+). In terms of processing, the disulfide bond which can form in the large chain dimeric partners within the hexadecamer appears to be associated with oxidative stress and protein turnover.

Its subcellular location is the plastid. It localises to the chloroplast. The enzyme catalyses 2 (2R)-3-phosphoglycerate + 2 H(+) = D-ribulose 1,5-bisphosphate + CO2 + H2O. It carries out the reaction D-ribulose 1,5-bisphosphate + O2 = 2-phosphoglycolate + (2R)-3-phosphoglycerate + 2 H(+). In terms of biological role, ruBisCO catalyzes two reactions: the carboxylation of D-ribulose 1,5-bisphosphate, the primary event in carbon dioxide fixation, as well as the oxidative fragmentation of the pentose substrate in the photorespiration process. Both reactions occur simultaneously and in competition at the same active site. The chain is Ribulose bisphosphate carboxylase large chain from Rivina humilis (Rougeplant).